Reading from the N-terminus, the 502-residue chain is ATP synthase subunit alpha (502 aa).

Residue 169–176 (GDRQTGKT) coordinates ATP.

The protein belongs to the ATPase alpha/beta chains family. As to quaternary structure, F-type ATPases have 2 components, CF(1) - the catalytic core - and CF(0) - the membrane proton channel. CF(1) has five subunits: alpha(3), beta(3), gamma(1), delta(1), epsilon(1). CF(0) has three main subunits: a(1), b(2) and c(9-12). The alpha and beta chains form an alternating ring which encloses part of the gamma chain. CF(1) is attached to CF(0) by a central stalk formed by the gamma and epsilon chains, while a peripheral stalk is formed by the delta and b chains.

It is found in the cell membrane. The enzyme catalyses ATP + H2O + 4 H(+)(in) = ADP + phosphate + 5 H(+)(out). Produces ATP from ADP in the presence of a proton gradient across the membrane. The alpha chain is a regulatory subunit. The sequence is that of ATP synthase subunit alpha from Bacillus sp. (strain PS3).